The primary structure comprises 396 residues: 2-methyl-aconitate isomerase (396 aa).

Residues serine 19 and 66–70 (SSTSK) each bind substrate. The active-site Proton donor/acceptor is the cysteine 104. Cysteine 104 carries the cysteine sulfinic acid (-SO2H) modification. The substrate site is built by asparagine 106, lysine 278, serine 309, and histidine 314. Methionine 318 serves as the catalytic Proton donor/acceptor. Residue glycine 319 participates in substrate binding.

Belongs to the PrpF family. Homodimer.

It catalyses the reaction 2-methyl-trans-aconitate = 2-methyl-cis-aconitate. It functions in the pathway organic acid metabolism; propanoate degradation. In terms of biological role, catalyzes the isomerization of 2-methyl-trans-aconitate to yield 2-methyl-cis-aconitate through a base-catalyzed proton abstraction coupled with a rotation about C2-C3 bond of 2-methyl-aconitate. The chain is 2-methyl-aconitate isomerase from Cupriavidus necator (Alcaligenes eutrophus).